The sequence spans 183 residues: Ribosome rescue factor SmrB (183 aa).

One can recognise a Smr domain in the interval 98–173 (LDLHGLTQKQ…GDAALLVLIE (76 aa)).

The protein belongs to the SmrB family. As to quaternary structure, associates with collided ribosomes, but not with correctly translating polysomes.

Its function is as follows. Acts as a ribosome collision sensor. Detects stalled/collided disomes (pairs of ribosomes where the leading ribosome is stalled and a second ribosome has collided with it) and endonucleolytically cleaves mRNA at the 5' boundary of the stalled ribosome. Stalled/collided disomes form a new interface (primarily via the 30S subunits) that binds SmrB. Cleaved mRNA becomes available for tmRNA ligation, leading to ribosomal subunit dissociation and rescue of stalled ribosomes. The chain is Ribosome rescue factor SmrB from Erwinia tasmaniensis (strain DSM 17950 / CFBP 7177 / CIP 109463 / NCPPB 4357 / Et1/99).